Reading from the N-terminus, the 359-residue chain is Methylthioribose-1-phosphate isomerase (359 aa).

The Proton donor role is filled by Asp-235.

Belongs to the eIF-2B alpha/beta/delta subunits family. MtnA subfamily.

Its subcellular location is the cytoplasm. The protein localises to the nucleus. It catalyses the reaction 5-(methylsulfanyl)-alpha-D-ribose 1-phosphate = 5-(methylsulfanyl)-D-ribulose 1-phosphate. The protein operates within amino-acid biosynthesis; L-methionine biosynthesis via salvage pathway; L-methionine from S-methyl-5-thio-alpha-D-ribose 1-phosphate: step 1/6. In terms of biological role, catalyzes the interconversion of methylthioribose-1-phosphate (MTR-1-P) into methylthioribulose-1-phosphate (MTRu-1-P). The polypeptide is Methylthioribose-1-phosphate isomerase (mri1) (Schizosaccharomyces pombe (strain 972 / ATCC 24843) (Fission yeast)).